An 895-amino-acid polypeptide reads, in one-letter code: Clathrin interactor EPSIN 2 (895 aa).

In terms of domain architecture, ENTH spans 18 to 150; the sequence is KKVLKVPGVE…NDKERIAEVR (133 aa). 3 stretches are compositionally biased toward basic and acidic residues: residues 150–161, 177–236, and 245–257; these read RQKAAANRDKYR, DKYD…RSRS, and RSSE…DGHS. The tract at residues 150–396 is disordered; the sequence is RQKAAANRDK…PTVTSMSAPT (247 aa). Residues serine 270 and serine 282 each carry the phosphoserine modification. The span at 329–348 shows a compositional bias: low complexity; that stretch reads AAPEAASPPTGTNTANTTAT. Composition is skewed to polar residues over residues 349–358 and 387–396; these read FVNESPSQKV and PTVTSMSAPT. Positions 409-413 match the Clathrin binding motif; that stretch reads LADVF. Disordered regions lie at residues 436–533 and 758–784; these read AGPA…PQEQ and KQTN…GRSG. Residues 440–454 show a composition bias toward low complexity; it reads PSFSTSQPSTQSFDD. Positions 454–456 match the ALPHA-ADR binding motif; it reads DPF. Composition is skewed to polar residues over residues 464–479, 515–533, and 759–769; these read FTST…NFGA, PASQ…PQEQ, and QTNTPATSTIN.

The protein belongs to the epsin family. In terms of assembly, interacts with clathrin, VTI12, DELTA-ADR and ALPHA-ADR.

It localises to the golgi apparatus. The protein resides in the cytoplasmic vesicle. The protein localises to the clathrin-coated vesicle. In terms of biological role, may have a role in transport via clathrin-coated vesicles from the trans-Golgi network to endosomes. Stimulates clathrin assembly. Binds to membranes enriched in phosphatidylinositol 3-phosphate (PtdIns(3)P). Plays an important role in protein trafficking. The chain is Clathrin interactor EPSIN 2 (EPSIN2) from Arabidopsis thaliana (Mouse-ear cress).